We begin with the raw amino-acid sequence, 417 residues long: Serine hydroxymethyltransferase (417 aa).

Residues Leu-121 and 125–127 (GHL) each bind (6S)-5,6,7,8-tetrahydrofolate. N6-(pyridoxal phosphate)lysine is present on Lys-230. Residue 355–357 (SPF) coordinates (6S)-5,6,7,8-tetrahydrofolate.

It belongs to the SHMT family. Homodimer. It depends on pyridoxal 5'-phosphate as a cofactor.

It localises to the cytoplasm. It carries out the reaction (6R)-5,10-methylene-5,6,7,8-tetrahydrofolate + glycine + H2O = (6S)-5,6,7,8-tetrahydrofolate + L-serine. Its pathway is one-carbon metabolism; tetrahydrofolate interconversion. The protein operates within amino-acid biosynthesis; glycine biosynthesis; glycine from L-serine: step 1/1. In terms of biological role, catalyzes the reversible interconversion of serine and glycine with tetrahydrofolate (THF) serving as the one-carbon carrier. This reaction serves as the major source of one-carbon groups required for the biosynthesis of purines, thymidylate, methionine, and other important biomolecules. Also exhibits THF-independent aldolase activity toward beta-hydroxyamino acids, producing glycine and aldehydes, via a retro-aldol mechanism. The chain is Serine hydroxymethyltransferase from Legionella pneumophila (strain Corby).